The sequence spans 312 residues: Cytochrome f (312 aa).

An N-terminal signal peptide occupies residues 1 to 28 (MQISKFFKFVFISVSLCGSLLFPQMANA). The heme site is built by Tyr-29, Cys-49, Cys-52, and His-53. Residues 278–298 (VKGMIAFFFTVTVAQILLVLK) form a helical membrane-spanning segment.

It belongs to the cytochrome f family. As to quaternary structure, the 4 large subunits of the cytochrome b6-f complex are cytochrome b6, subunit IV (17 kDa polypeptide, petD), cytochrome f and the Rieske protein, while the 4 small subunits are PetG, PetL, PetM and PetN. The complex functions as a dimer. It depends on heme as a cofactor.

It is found in the plastid. The protein resides in the chloroplast thylakoid membrane. Its function is as follows. Component of the cytochrome b6-f complex, which mediates electron transfer between photosystem II (PSII) and photosystem I (PSI), cyclic electron flow around PSI, and state transitions. The protein is Cytochrome f of Emiliania huxleyi (Coccolithophore).